Reading from the N-terminus, the 1170-residue chain is WD repeat-containing protein 35 (1170 aa).

5 WD repeats span residues 12–51 (PNNVKLKCISWNKDQGFIACGGEDGLLKVLRLETQTDDSK), 69–108 (GHSGAVQVVTWNEQYQKLTTSDQNGLIIVWMLYKGSWYEE), 113–152 (RNKSVVRSMSWNADGQKICIVYEDGAVIVGSVDGNRIWGK), 154–193 (LKGIQLCHVTWSADSKILLFGMANGEIHIYDNQGNFIMKM), and 491–528 (GTRDPICAITASDKTLIVGRESGVIQRYSFPNVALIQK).

As to quaternary structure, component of the IFT complex A (IFT-A) complex. IFT-A complex is divided into a core subcomplex composed of IFT122:IFT140:WDR19 which is associated with TULP3 and a peripheral subcomplex composed of IFT43:WDR35:TTC21B. Interacts directy with IFT122, ITF43 and TTC21B. Interacts with IFT43. Interacts with CFAP61. Expressed at high levels in testis and at lower levels in the brain (at protein level). Also present in other tissues, including heart, uterus, spinal cord, ovary, liver, kidney, lung, pancreas and stomach.

The protein localises to the cytoplasm. Its subcellular location is the cytoskeleton. The protein resides in the microtubule organizing center. It is found in the centrosome. It localises to the cilium axoneme. The protein localises to the cilium basal body. As a component of the IFT complex A (IFT-A), a complex required for retrograde ciliary transport and entry into cilia of G protein-coupled receptors (GPCRs), it is involved in ciliogenesis and ciliary protein trafficking. May promote CASP3 activation and TNF-stimulated apoptosis. The chain is WD repeat-containing protein 35 (Wdr35) from Rattus norvegicus (Rat).